The chain runs to 462 residues: tRNA modification GTPase MnmE (462 aa).

(6S)-5-formyl-5,6,7,8-tetrahydrofolate-binding residues include R27, E89, and R128. The 160-residue stretch at 224–383 (GLATAIVGRP…LDERIAKLFF (160 aa)) folds into the TrmE-type G domain. Residue N234 coordinates K(+). GTP is bound by residues 234 to 239 (NVGKSS), 253 to 259 (TDVAGTT), and 278 to 281 (DTAG). S238 provides a ligand contact to Mg(2+). Residues T253, V255, and T258 each coordinate K(+). T259 contacts Mg(2+). K462 is a binding site for (6S)-5-formyl-5,6,7,8-tetrahydrofolate.

This sequence belongs to the TRAFAC class TrmE-Era-EngA-EngB-Septin-like GTPase superfamily. TrmE GTPase family. Homodimer. Heterotetramer of two MnmE and two MnmG subunits. Requires K(+) as cofactor.

Its subcellular location is the cytoplasm. Functionally, exhibits a very high intrinsic GTPase hydrolysis rate. Involved in the addition of a carboxymethylaminomethyl (cmnm) group at the wobble position (U34) of certain tRNAs, forming tRNA-cmnm(5)s(2)U34. This chain is tRNA modification GTPase MnmE, found in Lacticaseibacillus paracasei (strain ATCC 334 / BCRC 17002 / CCUG 31169 / CIP 107868 / KCTC 3260 / NRRL B-441) (Lactobacillus paracasei).